Here is a 308-residue protein sequence, read N- to C-terminus: Aspartate carbamoyltransferase catalytic subunit (308 aa).

Residues Arg58 and Thr59 each contribute to the carbamoyl phosphate site. L-aspartate is bound at residue Lys86. Carbamoyl phosphate contacts are provided by Arg108, His136, and Gln139. L-aspartate contacts are provided by Arg169 and Arg227. Gly268 and Pro269 together coordinate carbamoyl phosphate.

The protein belongs to the aspartate/ornithine carbamoyltransferase superfamily. ATCase family. As to quaternary structure, heterododecamer (2C3:3R2) of six catalytic PyrB chains organized as two trimers (C3), and six regulatory PyrI chains organized as three dimers (R2).

The enzyme catalyses carbamoyl phosphate + L-aspartate = N-carbamoyl-L-aspartate + phosphate + H(+). It participates in pyrimidine metabolism; UMP biosynthesis via de novo pathway; (S)-dihydroorotate from bicarbonate: step 2/3. Functionally, catalyzes the condensation of carbamoyl phosphate and aspartate to form carbamoyl aspartate and inorganic phosphate, the committed step in the de novo pyrimidine nucleotide biosynthesis pathway. The chain is Aspartate carbamoyltransferase catalytic subunit from Chloroflexus aggregans (strain MD-66 / DSM 9485).